Consider the following 91-residue polypeptide: Defensin-like protein 269 (91 aa).

A signal peptide spans 1-25 (MAVSKTTMLIVLVAIILSCVSISNA). 4 disulfides stabilise this stretch: C41–C82, C53–C72, C59–C77, and C63–C79.

It belongs to the DEFL family.

Its subcellular location is the secreted. The protein is Defensin-like protein 269 of Arabidopsis thaliana (Mouse-ear cress).